Here is a 200-residue protein sequence, read N- to C-terminus: Probable nicotinate-nucleotide adenylyltransferase (200 aa).

It belongs to the NadD family.

The enzyme catalyses nicotinate beta-D-ribonucleotide + ATP + H(+) = deamido-NAD(+) + diphosphate. The protein operates within cofactor biosynthesis; NAD(+) biosynthesis; deamido-NAD(+) from nicotinate D-ribonucleotide: step 1/1. Catalyzes the reversible adenylation of nicotinate mononucleotide (NaMN) to nicotinic acid adenine dinucleotide (NaAD). The chain is Probable nicotinate-nucleotide adenylyltransferase from Leifsonia xyli subsp. xyli (strain CTCB07).